The chain runs to 521 residues: BAR/IMD domain-containing adapter protein 2 (521 aa).

The 250-residue stretch at Met-1–Ser-250 folds into the IMD domain. Residues Asp-132–Asn-153 adopt a coiled-coil conformation. Phosphoserine is present on residues Ser-262, Ser-324, Ser-326, and Ser-337. A disordered region spans residues Val-299–Ala-370. A compositionally biased stretch (low complexity) spans Gln-321 to Ser-335. Thr-341 carries the post-translational modification Phosphothreonine. Residue Ser-347 is modified to Phosphoserine. The segment covering Thr-349–Met-368 has biased composition (polar residues). A Phosphothreonine modification is found at Thr-361. Ser-367, Ser-385, Ser-396, and Ser-455 each carry phosphoserine. The region spanning Asn-375–Ser-438 is the SH3 domain. The tract at residues His-445–Pro-480 is disordered. The span at Ser-447–Asn-458 shows a compositional bias: polar residues.

In terms of assembly, homodimer. Interacts with CDC42 and RAC1 that have been activated by GTP binding. Interacts with ATN1, ADGRB1, DIAPH1, EPS8, SHANK1, SHANK2, SHANK3, TIAM1, WASF1 and WASF2. Interacts with ENAH after recruitment of CDC42. Post-translationally, phosphorylated on tyrosine residues by INSR in response to insulin treatment.

Its subcellular location is the cytoplasm. It is found in the membrane. It localises to the cell projection. The protein localises to the filopodium. The protein resides in the ruffle. Its subcellular location is the cytoskeleton. Adapter protein that links membrane-bound small G-proteins to cytoplasmic effector proteins. Necessary for CDC42-mediated reorganization of the actin cytoskeleton and for RAC1-mediated membrane ruffling. Involved in the regulation of the actin cytoskeleton by WASF family members and the Arp2/3 complex. Plays a role in neurite growth. Acts syngeristically with ENAH to promote filipodia formation. Plays a role in the reorganization of the actin cytoskeleton in response to bacterial infection. Participates in actin bundling when associated with EPS8, promoting filopodial protrusions. This chain is BAR/IMD domain-containing adapter protein 2 (BAIAP2), found in Cricetulus griseus (Chinese hamster).